The chain runs to 67 residues: Large ribosomal subunit protein uL29 (67 aa).

This sequence belongs to the universal ribosomal protein uL29 family.

This chain is Large ribosomal subunit protein uL29, found in Wolbachia pipientis wMel.